Reading from the N-terminus, the 75-residue chain is Small ribosomal subunit protein bS18 (75 aa).

It belongs to the bacterial ribosomal protein bS18 family. Part of the 30S ribosomal subunit. Forms a tight heterodimer with protein bS6.

Binds as a heterodimer with protein bS6 to the central domain of the 16S rRNA, where it helps stabilize the platform of the 30S subunit. The chain is Small ribosomal subunit protein bS18 from Ruegeria sp. (strain TM1040) (Silicibacter sp.).